We begin with the raw amino-acid sequence, 150 residues long: Nucleoside diphosphate kinase (150 aa).

6 residues coordinate ATP: lysine 9, phenylalanine 57, arginine 85, threonine 91, arginine 102, and asparagine 112. Catalysis depends on histidine 115, which acts as the Pros-phosphohistidine intermediate.

This sequence belongs to the NDK family. The cofactor is Mg(2+).

The protein localises to the cytoplasm. The catalysed reaction is a 2'-deoxyribonucleoside 5'-diphosphate + ATP = a 2'-deoxyribonucleoside 5'-triphosphate + ADP. It catalyses the reaction a ribonucleoside 5'-diphosphate + ATP = a ribonucleoside 5'-triphosphate + ADP. In terms of biological role, major role in the synthesis of nucleoside triphosphates other than ATP. The ATP gamma phosphate is transferred to the NDP beta phosphate via a ping-pong mechanism, using a phosphorylated active-site intermediate. This is Nucleoside diphosphate kinase from Methanoregula boonei (strain DSM 21154 / JCM 14090 / 6A8).